Consider the following 256-residue polypeptide: Enolase-phosphatase E1 (256 aa).

Mg(2+) contacts are provided by aspartate 13 and glutamate 15. Residues 127-128 (SS) and lysine 175 contribute to the substrate site. Aspartate 202 is a Mg(2+) binding site.

The protein belongs to the HAD-like hydrolase superfamily. MasA/MtnC family. As to quaternary structure, monomer. It depends on Mg(2+) as a cofactor.

It is found in the cytoplasm. The protein localises to the nucleus. It catalyses the reaction 5-methylsulfanyl-2,3-dioxopentyl phosphate + H2O = 1,2-dihydroxy-5-(methylsulfanyl)pent-1-en-3-one + phosphate. Its pathway is amino-acid biosynthesis; L-methionine biosynthesis via salvage pathway; L-methionine from S-methyl-5-thio-alpha-D-ribose 1-phosphate: step 3/6. It functions in the pathway amino-acid biosynthesis; L-methionine biosynthesis via salvage pathway; L-methionine from S-methyl-5-thio-alpha-D-ribose 1-phosphate: step 4/6. Functionally, bifunctional enzyme that catalyzes the enolization of 2,3-diketo-5-methylthiopentyl-1-phosphate (DK-MTP-1-P) into the intermediate 2-hydroxy-3-keto-5-methylthiopentenyl-1-phosphate (HK-MTPenyl-1-P), which is then dephosphorylated to form the acireductone 1,2-dihydroxy-3-keto-5-methylthiopentene (DHK-MTPene). The protein is Enolase-phosphatase E1 (utr4) of Botryotinia fuckeliana (strain B05.10) (Noble rot fungus).